The primary structure comprises 667 residues: Leucine-rich repeat-containing protein 43 (667 aa).

Residues 1–11 (METSESSTSDY) show a composition bias toward polar residues. Residues 1–24 (METSESSTSDYRQTEGEGEGVPGT) form a disordered region. 4 LRR repeats span residues 148–169 (KLEE…NLPP), 170–191 (TLKV…CSAP), 194–213 (RLQH…ESLY), and 221–242 (QLVS…ILGL). The region spanning 256 to 294 (NPLSLVPYYRGFTIDSLAHLCVLDDITVSPNEKHQFRGL) is the LRRCT domain. Disordered stretches follow at residues 374–407 (FSGT…TEEM), 533–570 (ESPL…RQDP), and 616–640 (SKKV…SGYQ). Acidic residues predominate over residues 377–386 (TDEEDQQEDP). The span at 390 to 399 (RHRHRGRQRF) shows a compositional bias: basic residues. Residues 540–553 (KGKDNNKKKEPAKD) show a composition bias toward basic and acidic residues. Basic residues predominate over residues 617 to 627 (KKVKKSLKKDR).

The chain is Leucine-rich repeat-containing protein 43 (Lrrc43) from Mus musculus (Mouse).